The primary structure comprises 824 residues: AMP deaminase 2 (824 aa).

The tract at residues 1 to 43 (MASYPGPGKSKAKYPFKKRASLQASAAAPEARSGLGASPLQSA) is disordered. Basic residues predominate over residues 10-20 (SKAKYPFKKRA). Phosphoserine is present on serine 21. Over residues 21-33 (SLQASAAAPEARS) the composition is skewed to low complexity. At arginine 44 the chain carries Omega-N-methylarginine. Serine 45, serine 63, and serine 79 each carry phosphoserine. Tyrosine 90 is modified (phosphotyrosine). A phosphoserine mark is found at serine 96 and serine 113. Phosphothreonine is present on threonine 133. A phosphoserine mark is found at serine 135 and serine 137. Histidine 364 and histidine 366 together coordinate Zn(2+). Residues histidine 366 and 435–440 (KFNAKY) each bind substrate. Zn(2+) is bound at residue histidine 633. A substrate-binding site is contributed by glutamate 636. Histidine 655 acts as the Proton acceptor in catalysis. Residue aspartate 710 participates in Zn(2+) binding. 711 to 714 (DPLQ) is a binding site for substrate.

It belongs to the metallo-dependent hydrolases superfamily. Adenosine and AMP deaminases family. In terms of assembly, homotetramer. Zn(2+) is required as a cofactor.

It catalyses the reaction AMP + H2O + H(+) = IMP + NH4(+). It functions in the pathway purine metabolism; IMP biosynthesis via salvage pathway; IMP from AMP: step 1/1. Functionally, AMP deaminase plays a critical role in energy metabolism. Catalyzes the deamination of AMP to IMP and plays an important role in the purine nucleotide cycle. The polypeptide is AMP deaminase 2 (Rattus norvegicus (Rat)).